We begin with the raw amino-acid sequence, 667 residues long: Cysteine-rich receptor-like protein kinase 11 (667 aa).

The N-terminal stretch at 1 to 24 (MKQRSLFSVLCFFFISFGVASVSA) is a signal peptide. 2 Gnk2-homologous domains span residues 25–129 (QTCT…NTSF) and 135–248 (LNPR…LYTY). Residues 25–292 (QTCTTDKGTF…SKGISAGVVV (268 aa)) are Extracellular-facing. Residues N37, N54, N64, N106, N126, N150, and N254 are each glycosylated (N-linked (GlcNAc...) asparagine). Pro residues predominate over residues 259–268 (SPPPEPPVTV). Residues 259–282 (SPPPEPPVTVPQPAGDQDNPTNND) are disordered. N281 carries N-linked (GlcNAc...) asparagine glycosylation. The helical transmembrane segment at 293–313 (AITVPTVIAILILLVLGFVLF) threads the bilayer. Residues 314–667 (RRRKSYQRTK…YTSKSSSFSS (354 aa)) are Cytoplasmic-facing. In terms of domain architecture, Protein kinase spans 350–629 (FSTSNKLGEG…IILMLTSNTI (280 aa)). ATP-binding positions include 356 to 364 (LGEGGFGAV) and K378. Y423 carries the post-translational modification Phosphotyrosine. D475 functions as the Proton acceptor in the catalytic mechanism. S479 bears the Phosphoserine mark. Position 515 is a phosphothreonine (T515). Y523 is subject to Phosphotyrosine.

The protein belongs to the protein kinase superfamily. Ser/Thr protein kinase family. CRK subfamily. Detected in root, stem, leaf and flower.

The protein localises to the membrane. It carries out the reaction L-seryl-[protein] + ATP = O-phospho-L-seryl-[protein] + ADP + H(+). The enzyme catalyses L-threonyl-[protein] + ATP = O-phospho-L-threonyl-[protein] + ADP + H(+). The protein is Cysteine-rich receptor-like protein kinase 11 (CRK11) of Arabidopsis thaliana (Mouse-ear cress).